The sequence spans 205 residues: Metalloproteinase inhibitor 1 (205 aa).

Residues Met1–Ala24 form the signal peptide. Cys25 is a Zn(2+) binding site. The interval Cys25–Ala28 is involved in metalloproteinase-binding. 6 disulfide bridges follow: Cys25/Cys94, Cys27/Cys123, Cys37/Cys148, Cys151/Cys197, Cys156/Cys161, and Cys169/Cys189. An NTR domain is found at Cys25 to Cys148. Asn54 carries N-linked (GlcNAc...) asparagine glycosylation. An involved in metalloproteinase-binding region spans residues Glu91–Ser92. Residue Asn102 is glycosylated (N-linked (GlcNAc...) asparagine). The residue at position 179 (Ser179) is a Phosphoserine.

Belongs to the protease inhibitor I35 (TIMP) family. Interacts with MMP1, MMP3, MMP10 and MMP13, but has only very low affinity for MMP14. Interacts with CD63; identified in a complex with CD63 and ITGB1. The activity of TIMP1 is dependent on the presence of disulfide bonds. Post-translationally, N-glycosylated. Found in fetal and adult tissues. Highest levels are found in bone. Also found in lung, ovary and uterus.

Its subcellular location is the secreted. Its function is as follows. Metalloproteinase inhibitor that functions by forming one to one complexes with target metalloproteinases, such as collagenases, and irreversibly inactivates them by binding to their catalytic zinc cofactor. Acts on MMP1, MMP2, MMP3, MMP7, MMP8, MMP9, MMP10, MMP11, MMP12, MMP13 and MMP16. Does not act on MMP14. Also functions as a growth factor that regulates cell differentiation, migration and cell death and activates cellular signaling cascades via CD63 and ITGB1. Plays a role in integrin signaling. The polypeptide is Metalloproteinase inhibitor 1 (Timp1) (Mus musculus (Mouse)).